Reading from the N-terminus, the 514-residue chain is 2,3-bisphosphoglycerate-independent phosphoglycerate mutase (514 aa).

Mn(2+) is bound by residues Asp-14 and Ser-64. Ser-64 acts as the Phosphoserine intermediate in catalysis. Residues His-125, 155–156, Arg-187, Arg-193, 263–266, and Lys-336 each bind substrate; these read RD and RADR. Mn(2+) is bound by residues Asp-403, His-407, Asp-444, His-445, and His-463.

It belongs to the BPG-independent phosphoglycerate mutase family. In terms of assembly, monomer. It depends on Mn(2+) as a cofactor.

The enzyme catalyses (2R)-2-phosphoglycerate = (2R)-3-phosphoglycerate. It participates in carbohydrate degradation; glycolysis; pyruvate from D-glyceraldehyde 3-phosphate: step 3/5. Catalyzes the interconversion of 2-phosphoglycerate and 3-phosphoglycerate. The sequence is that of 2,3-bisphosphoglycerate-independent phosphoglycerate mutase from Shewanella putrefaciens (strain CN-32 / ATCC BAA-453).